The primary structure comprises 901 residues: Mediator of RNA polymerase II transcription subunit 14 (901 aa).

This sequence belongs to the Mediator complex subunit 14 family. As to quaternary structure, component of the Mediator complex.

It localises to the nucleus. In terms of biological role, component of the Mediator complex, a coactivator involved in the regulated transcription of nearly all RNA polymerase II-dependent genes. Mediator functions as a bridge to convey information from gene-specific regulatory proteins to the basal RNA polymerase II transcription machinery. Mediator is recruited to promoters by direct interactions with regulatory proteins and serves as a scaffold for the assembly of a functional preinitiation complex with RNA polymerase II and the general transcription factors. The chain is Mediator of RNA polymerase II transcription subunit 14 (RGR1) from Yarrowia lipolytica (strain CLIB 122 / E 150) (Yeast).